The sequence spans 188 residues: dCTP deaminase (188 aa).

Residues 111 to 116 (KSTYAR), 135 to 137 (TLE), Q156, Y170, K179, and Q180 each bind dCTP. E137 acts as the Proton donor/acceptor in catalysis.

The protein belongs to the dCTP deaminase family. In terms of assembly, homotrimer.

The enzyme catalyses dCTP + H2O + H(+) = dUTP + NH4(+). It functions in the pathway pyrimidine metabolism; dUMP biosynthesis; dUMP from dCTP (dUTP route): step 1/2. Catalyzes the deamination of dCTP to dUTP. The sequence is that of dCTP deaminase from Rickettsia bellii (strain OSU 85-389).